The sequence spans 691 residues: Putative calcium up-regulated protein I (691 aa).

Residues 47-174 (SNCYLKEKPQ…NYTSQIWTYN (128 aa)) enclose the Ricin B-type lectin domain.

This sequence belongs to the cup family.

The polypeptide is Putative calcium up-regulated protein I (cupI) (Dictyostelium discoideum (Social amoeba)).